Reading from the N-terminus, the 264-residue chain is 3-methyl-2-oxobutanoate hydroxymethyltransferase (264 aa).

Mg(2+) is bound by residues Asp-45 and Asp-84. 3-methyl-2-oxobutanoate-binding positions include 45 to 46 (DS), Asp-84, and Lys-112. Position 114 (Glu-114) interacts with Mg(2+). Residue Glu-181 is the Proton acceptor of the active site.

It belongs to the PanB family. In terms of assembly, homodecamer; pentamer of dimers. The cofactor is Mg(2+).

Its subcellular location is the cytoplasm. The enzyme catalyses 3-methyl-2-oxobutanoate + (6R)-5,10-methylene-5,6,7,8-tetrahydrofolate + H2O = 2-dehydropantoate + (6S)-5,6,7,8-tetrahydrofolate. It functions in the pathway cofactor biosynthesis; (R)-pantothenate biosynthesis; (R)-pantoate from 3-methyl-2-oxobutanoate: step 1/2. Its function is as follows. Catalyzes the reversible reaction in which hydroxymethyl group from 5,10-methylenetetrahydrofolate is transferred onto alpha-ketoisovalerate to form ketopantoate. This is 3-methyl-2-oxobutanoate hydroxymethyltransferase from Psychromonas ingrahamii (strain DSM 17664 / CCUG 51855 / 37).